Here is a 320-residue protein sequence, read N- to C-terminus: Ribonuclease Z (320 aa).

His-63, His-65, Asp-67, His-68, His-141, Asp-212, and His-270 together coordinate Zn(2+). Residue Asp-67 is the Proton acceptor of the active site.

It belongs to the RNase Z family. In terms of assembly, homodimer. Requires Zn(2+) as cofactor.

It catalyses the reaction Endonucleolytic cleavage of RNA, removing extra 3' nucleotides from tRNA precursor, generating 3' termini of tRNAs. A 3'-hydroxy group is left at the tRNA terminus and a 5'-phosphoryl group is left at the trailer molecule.. Zinc phosphodiesterase, which displays some tRNA 3'-processing endonuclease activity. Probably involved in tRNA maturation, by removing a 3'-trailer from precursor tRNA. The polypeptide is Ribonuclease Z (Lacticaseibacillus casei (strain BL23) (Lactobacillus casei)).